Reading from the N-terminus, the 237-residue chain is tRNA (guanine-N(1)-)-methyltransferase (237 aa).

S-adenosyl-L-methionine is bound by residues G115 and 134-139 (LGDFVL).

It belongs to the RNA methyltransferase TrmD family. In terms of assembly, homodimer.

The protein resides in the cytoplasm. The enzyme catalyses guanosine(37) in tRNA + S-adenosyl-L-methionine = N(1)-methylguanosine(37) in tRNA + S-adenosyl-L-homocysteine + H(+). In terms of biological role, specifically methylates guanosine-37 in various tRNAs. This is tRNA (guanine-N(1)-)-methyltransferase from Synechococcus sp. (strain RCC307).